The primary structure comprises 180 residues: ATP synthase subunit delta (180 aa).

It belongs to the ATPase delta chain family. As to quaternary structure, F-type ATPases have 2 components, F(1) - the catalytic core - and F(0) - the membrane proton channel. F(1) has five subunits: alpha(3), beta(3), gamma(1), delta(1), epsilon(1). CF(0) has four main subunits: a(1), b(1), b'(1) and c(10-14). The alpha and beta chains form an alternating ring which encloses part of the gamma chain. F(1) is attached to F(0) by a central stalk formed by the gamma and epsilon chains, while a peripheral stalk is formed by the delta, b and b' chains.

It localises to the cellular thylakoid membrane. Its function is as follows. F(1)F(0) ATP synthase produces ATP from ADP in the presence of a proton or sodium gradient. F-type ATPases consist of two structural domains, F(1) containing the extramembraneous catalytic core and F(0) containing the membrane proton channel, linked together by a central stalk and a peripheral stalk. During catalysis, ATP synthesis in the catalytic domain of F(1) is coupled via a rotary mechanism of the central stalk subunits to proton translocation. Functionally, this protein is part of the stalk that links CF(0) to CF(1). It either transmits conformational changes from CF(0) to CF(1) or is implicated in proton conduction. This chain is ATP synthase subunit delta, found in Prochlorococcus marinus (strain MIT 9515).